We begin with the raw amino-acid sequence, 212 residues long: HTH-type transcriptional regulatory protein RaaS (212 aa).

Residues 6–65 (LTAHARIREAAIEQFGRHGFGVGLRAIAEAAGVSAALVIHHFGSKEGLRKACDDFVAEEI) form the HTH tetR-type domain. The H-T-H motif DNA-binding region spans 28–47 (GLRAIAEAAGVSAALVIHHF).

Homodimer. Interacts with long chain acyl-CoA derivatives. Interacts with several drugs such rhodamine 6G, ethidium and safranin O.

With respect to regulation, interaction with long chain acyl-CoA derivatives (oleoyl-CoA and, to lesser extent, stearoyl-CoA) prevents binding to DNA, leading to the expression of the target genes. Long chain acyl-CoA derivatives may serve as biological indicators of the bacterial metabolic state. Its function is as follows. Regulates the expression of the Rv1217c-Rv1218c multidrug efflux system and its own expression. Acts by binding to promoter regions of Rv1219c and upstream of the Rv1218c gene. Important for survival in prolonged stationary phase and during macrophage infection. May be used to eliminate non-growing mycobacteria. The protein is HTH-type transcriptional regulatory protein RaaS of Mycobacterium tuberculosis (strain ATCC 25618 / H37Rv).